We begin with the raw amino-acid sequence, 863 residues long: Scm-like with four MBT domains protein 1 (863 aa).

4 MBT repeats span residues 20–120 (FSWE…LEAP), 128–232 (SDWN…LQPP), 242–346 (ADWQ…INPP), and 354–451 (FDWA…LSTP). The interval 638 to 773 (KKKNKRIGRP…SDDENKPPSP (136 aa)) is disordered. Residues 660-679 (KSSKRRKRRKNIFVHKKKRS) show a composition bias toward basic residues. Residues 680–691 (SASVDNTPVGSP) are compositionally biased toward polar residues. Acidic residues-rich tracts occupy residues 696–710 (GEDEEDADDGDEDSL) and 718–727 (QQEELQEESE). Residues 734-744 (SSSSPTQSETP) are compositionally biased toward low complexity. Phosphoserine is present on residues serine 764 and serine 772. Residues 793–861 (WSVADVVRFI…RIKFAFYEQF (69 aa)) form the SAM domain.

In terms of assembly, interacts with MYOD1. Component of the SLC (SFMBT1-LSD1-CoREST) corepressor complex, which also contains KDM1A/LSD1 and RCOR1/CoREST. Interacts with KDM1A/LSD1 and RCOR1/CoREST. Interacts with MYOD1. Interacts with L3MBTL3. As to expression, highly expressed in the testis, low expression is detected in brain, kidney, heart and lung. Highly expressed in germ cells, where it associates with the synaptic regions of meiotic chromosomes in pachytene stage spermatocytes.

The protein localises to the nucleus. In terms of biological role, histone-binding protein, which is part of various corepressor complexes. Mediates the recruitment of corepressor complexes to target genes, followed by chromatin compaction and repression of transcription. Plays a role during myogenesis: required for the maintenance of undifferentiated states of myogenic progenitor cells via interaction with MYOD1. Interaction with MYOD1 leads to the recruitment of associated corepressors and silencing of MYOD1 target genes. Part of the SLC complex in germ cells, where it may play a role during spermatogenesis. The protein is Scm-like with four MBT domains protein 1 (Sfmbt1) of Mus musculus (Mouse).